A 297-amino-acid chain; its full sequence is Tumor necrosis factor receptor superfamily member 27 (297 aa).

Over 1-138 the chain is Extracellular; it reads MDCQENEYWD…TPTVPPQEAT (138 aa). 3 TNFR-Cys repeats span residues 2 to 41, 43 to 83, and 85 to 118; these read DCQE…DAYC, ACPP…NAVC, and DCLP…EVQC. 8 disulfides stabilise this stretch: Cys3-Cys15, Cys18-Cys31, Cys21-Cys41, Cys44-Cys58, Cys61-Cys75, Cys64-Cys83, Cys86-Cys104, and Cys107-Cys118. The N-linked (GlcNAc...) asparagine glycan is linked to Asn74. The chain crosses the membrane as a helical; Signal-anchor for type III membrane protein span at residues 139 to 159; it reads LVALVSSLLVVFTLAFLGLFF. Over 160–297 the chain is Cytoplasmic; the sequence is LYCKQFFNRH…LNVPFEVPSP (138 aa). The segment covering 272–281 has biased composition (polar residues); it reads ETLGGNTVES. The tract at residues 272–297 is disordered; the sequence is ETLGGNTVESTGDRLELNVPFEVPSP.

Associates with TRAF1, TRAF3 and TRAF6.

It is found in the membrane. Receptor for EDA isoform A2, but not for EDA isoform A1. Mediates the activation of the NF-kappa-B and JNK pathways. Activation seems to be mediated by binding to TRAF3 and TRAF6. This Homo sapiens (Human) protein is Tumor necrosis factor receptor superfamily member 27 (EDA2R).